Here is a 127-residue protein sequence, read N- to C-terminus: Histone H2B type 1-A (127 aa).

Position 2 is an N-acetylproline (proline 2). Lysine 7, lysine 13, lysine 14, lysine 17, lysine 18, lysine 22, and lysine 25 each carry N6-acetyllysine; alternate. An N6-crotonyllysine; alternate mark is found at lysine 7, lysine 13, lysine 14, lysine 17, lysine 18, lysine 22, lysine 25, and lysine 36. Residues lysine 7 and lysine 13 each carry the N6-lactoyllysine; alternate modification. Residue lysine 7 forms a Glycyl lysine isopeptide (Lys-Gly) (interchain with G-Cter in SUMO2); alternate linkage. N6-lactoyllysine; alternate occurs at positions 17, 18, 22, and 25. Lysine 22 participates in a covalent cross-link: Glycyl lysine isopeptide (Lys-Gly) (interchain with G-Cter in SUMO2); alternate. Lysine 36 bears the N6-succinyllysine; alternate mark. Lysine 36 is covalently cross-linked (Glycyl lysine isopeptide (Lys-Gly) (interchain with G-Cter in ubiquitin); alternate). Serine 38 bears the Phosphoserine mark. Lysine 45 carries the post-translational modification N6-lactoyllysine; alternate. N6-methyllysine is present on lysine 48. Lysine 59 is subject to N6,N6-dimethyllysine. Arginine 81 bears the Dimethylated arginine mark. Lysine 87 is modified (N6-acetyllysine; alternate). Lysine 87 carries the N6-lactoyllysine; alternate modification. Lysine 87 is modified (N6,N6,N6-trimethyllysine; alternate). An omega-N-methylarginine mark is found at arginine 88 and arginine 94. Residue lysine 110 is modified to N6-lactoyllysine; alternate. An N6-methyllysine modification is found at lysine 110. Threonine 117 bears the Phosphothreonine mark. N6-lactoyllysine; alternate is present on residues lysine 118 and lysine 122. Lysine 118 and lysine 122 each carry N6-succinyllysine; alternate. Lysine 118 bears the N6-methylated lysine; alternate mark. Lysine 122 is covalently cross-linked (Glycyl lysine isopeptide (Lys-Gly) (interchain with G-Cter in ubiquitin); alternate).

Belongs to the histone H2B family. In terms of assembly, the nucleosome is a histone octamer containing two molecules each of H2A, H2B, H3 and H4 assembled in one H3-H4 heterotetramer and two H2A-H2B heterodimers. Interacts with H2AB1; preferentially dimerizes with H2AB1 to form nucleosomes. Monoubiquitination at Lys-36 by the MSL1/MSL2 dimer is required for histone H3 'Lys-4' (H3K4me) and 'Lys-79' (H3K79me) methylation and transcription activation at specific gene loci, such as HOXA9 and MEIS1 loci. Similarly, monoubiquitination of Lys-122 (H2BK120Ub) by the RNF20/40 complex gives a specific tag for epigenetic transcriptional activation and is also prerequisite for histone H3 'Lys-4' and 'Lys-79' methylation. It also functions cooperatively with the FACT dimer to stimulate elongation by RNA polymerase II. H2BK120Ub also acts as a regulator of mRNA splicing: deubiquitination by USP49 is required for efficient cotranscriptional splicing of a large set of exons. Post-translationally, crotonylation (Kcr) is specifically present in male germ cells and marks testis-specific genes in post-meiotic cells, including X-linked genes that escape sex chromosome inactivation in haploid cells. Crotonylation marks active promoters and enhancers and confers resistance to transcriptional repressors. It is also associated with post-meiotically activated genes on autosomes. In terms of processing, acetylated during spermatogenesis. Acetylated form is most abundant in spermatogonia compared to spermatocytes and round spermatids. Phosphorylated at Thr-117 in spermatogonia, spermatocytes and round spermatids. Post-translationally, methylated at Lys-118 in spermatogonia, spermatocytes and round spermatids. In terms of processing, lactylated in macrophages by EP300/P300 by using lactoyl-CoA directly derived from endogenous or exogenous lactate, leading to stimulates gene transcription. In terms of tissue distribution, mainly expressed in testis, and the corresponding protein is also present in mature sperm. Also present in metaphase oocytes (at protein level).

It is found in the nucleus. The protein resides in the chromosome. In terms of biological role, variant histone specifically required to direct the transformation of dissociating nucleosomes to protamine in male germ cells. Entirely replaces classical histone H2B prior nucleosome to protamine transition and probably acts as a nucleosome dissociating factor that creates a more dynamic chromatin, facilitating the large-scale exchange of histones. In condensing spermatids, the heterodimer between H2AB1 and H2BC1/TH2B is loaded onto the nucleosomes and promotes loading of transition proteins (TNP1 and TNP2) onto the nucleosomes. Inclusion of the H2AB1-H2BC1/TH2B dimer into chromatin opens the nucleosomes, releasing the nucleosomal DNA ends and allowing the invasion of nucleosomes by transition proteins (TNP1 and TNP2). Then, transition proteins drive the recruitment and processing of protamines, which are responsible for histone eviction. Also expressed maternally and is present in the female pronucleus, suggesting a similar role in protamine replacement by nucleosomes at fertilization. Core component of nucleosome. Nucleosomes wrap and compact DNA into chromatin, limiting DNA accessibility to the cellular machineries which require DNA as a template. Histones thereby play a central role in transcription regulation, DNA repair, DNA replication and chromosomal stability. DNA accessibility is regulated via a complex set of post-translational modifications of histones, also called histone code, and nucleosome remodeling. In Mus musculus (Mouse), this protein is Histone H2B type 1-A.